Consider the following 501-residue polypeptide: Cytochrome P450 71B25 (501 aa).

Residues 1-21 (MAILQSFLLLLSLPFLFTLIY) form a helical membrane-spanning segment. Residue C445 participates in heme binding.

It belongs to the cytochrome P450 family. Requires heme as cofactor.

It is found in the membrane. This is Cytochrome P450 71B25 (CYP71B25) from Arabidopsis thaliana (Mouse-ear cress).